A 506-amino-acid polypeptide reads, in one-letter code: Cysteine--tRNA ligase (506 aa).

Zn(2+) is bound at residue Cys-34. The 'HIGH' region motif lies at 36 to 46; sequence PTVYDFAHIGN. Cys-230, His-269, and Glu-273 together coordinate Zn(2+). The 'KMSKS' region signature appears at 302-306; it reads KMSKS. An ATP-binding site is contributed by Lys-305.

It belongs to the class-I aminoacyl-tRNA synthetase family. In terms of assembly, monomer. It depends on Zn(2+) as a cofactor.

The protein resides in the cytoplasm. The enzyme catalyses tRNA(Cys) + L-cysteine + ATP = L-cysteinyl-tRNA(Cys) + AMP + diphosphate. The protein is Cysteine--tRNA ligase of Brucella abortus (strain S19).